We begin with the raw amino-acid sequence, 451 residues long: MSVPQDVSIFTAYNANVDAITKLNGETIQKLINEFGEKEIAERIEEYPREIREPIDFVARLIHALRLGKPTAVPLVDESLNSWFDEKFEYELERLGGQAGIIANVLAGLGIKKVIAYTPFLPKRLADLFKEGVLYPTVENGELKLKPIREAYRDEDPLKINRIFEFRKGTKFKFLGESVEVPASGRFIVSARFESISKIETKEELRPFLDDIGKEVDGAIFSGYQGLRLKYSDGKDANYYLRRAKEDIISLKEEDVKVHVELASIQDRKLRKKVITNILPIADSVGIDEAEIAQLLSVLGYRDLADRIFTYNRLEDSILGGMIILDELNFEILQVHTIYYLMYITHRDNPLSEEELMKSLEFGTTLAAARASLGDINRPEDYEIGLKVPFNERSEYVKLRFEEAKTKLRMREYKVVVIPTRLVPNPVLTVGLGDTISAGAFITYVNYLKRH.

The ADPK domain occupies 1 to 450 (MSVPQDVSIF…FITYVNYLKR (450 aa)). The Mg(2+) site is built by Glu261, Glu291, and Asp434. Asp434 acts as the Proton acceptor in catalysis.

The protein belongs to the carbohydrate kinase PfkC family. The cofactor is Mg(2+).

It localises to the cytoplasm. The enzyme catalyses beta-D-fructose 6-phosphate + ADP = beta-D-fructose 1,6-bisphosphate + AMP + H(+). The protein operates within carbohydrate degradation; glycolysis. Functionally, catalyzes the phosphorylation of fructose 6-phosphate to fructose 1,6-bisphosphate using ADP as the phosphate donor. This is ADP-specific phosphofructokinase from Pyrococcus abyssi (strain GE5 / Orsay).